A 1035-amino-acid polypeptide reads, in one-letter code: DNA polymerase I B, mitochondrial (1035 aa).

Residues 1–42 (MAVAPPLPPAPARLLRRWQGSSPWLSSSFGRTRYFSRPAFAA) constitute a mitochondrion transit peptide. The tract at residues 100 to 124 (TNGTTPLRVGNLRHDPSEDIRSSNY) is disordered. Positions 111–120 (LRHDPSEDIR) are enriched in basic and acidic residues. A 3'-5' exonuclease domain is found at 317-478 (FGNGKTCIWV…LYESLKNKLE (162 aa)). The segment at 699-1032 (HAIAALCEVF…VDAKYAKSWY (334 aa)) is polymerase.

The protein belongs to the DNA polymerase type-A family.

The protein localises to the mitochondrion. The enzyme catalyses DNA(n) + a 2'-deoxyribonucleoside 5'-triphosphate = DNA(n+1) + diphosphate. Its activity is regulated as follows. Not inhibited by aphidicolin. In addition to polymerase activity, this DNA polymerase exhibits 5'-3' exonuclease activity. May be required for DNA replication and accumulation in mitochondria. The sequence is that of DNA polymerase I B, mitochondrial from Oryza sativa subsp. japonica (Rice).